A 367-amino-acid chain; its full sequence is Phospho-N-acetylmuramoyl-pentapeptide-transferase (367 aa).

A run of 10 helical transmembrane segments spans residues 27 to 47 (VLAA…VIRW), 73 to 93 (TMGG…WGDL), 97 to 117 (YVWT…YDDW), 132 to 152 (WKFF…AFSA), 167 to 187 (TMAY…VIVG), 200 to 220 (GLAI…AYVT), 237 to 257 (AGEL…FLWF), 264 to 284 (VFMG…VAVI), 289 to 309 (IVLL…MLQV), and 344 to 364 (QVVV…LSTL).

This sequence belongs to the glycosyltransferase 4 family. MraY subfamily. Mg(2+) serves as cofactor.

The protein resides in the cell inner membrane. It carries out the reaction UDP-N-acetyl-alpha-D-muramoyl-L-alanyl-gamma-D-glutamyl-meso-2,6-diaminopimeloyl-D-alanyl-D-alanine + di-trans,octa-cis-undecaprenyl phosphate = di-trans,octa-cis-undecaprenyl diphospho-N-acetyl-alpha-D-muramoyl-L-alanyl-D-glutamyl-meso-2,6-diaminopimeloyl-D-alanyl-D-alanine + UMP. Its pathway is cell wall biogenesis; peptidoglycan biosynthesis. Catalyzes the initial step of the lipid cycle reactions in the biosynthesis of the cell wall peptidoglycan: transfers peptidoglycan precursor phospho-MurNAc-pentapeptide from UDP-MurNAc-pentapeptide onto the lipid carrier undecaprenyl phosphate, yielding undecaprenyl-pyrophosphoryl-MurNAc-pentapeptide, known as lipid I. The protein is Phospho-N-acetylmuramoyl-pentapeptide-transferase of Dechloromonas aromatica (strain RCB).